The primary structure comprises 165 residues: Small ribosomal subunit protein bS16 (165 aa).

Positions 84 to 165 (WTHGNNPEKG…EAPAEEAAEG (82 aa)) are disordered. Over residues 89 to 130 (NPEKGKPGKKAQERLAERAQREEERKQAEADAKAAAEAEKAA) the composition is skewed to basic and acidic residues. Low complexity predominate over residues 131 to 157 (AAEAAAAAAAAPAVEEAPAEEAPAAEA).

It belongs to the bacterial ribosomal protein bS16 family.

This is Small ribosomal subunit protein bS16 from Caulobacter vibrioides (strain ATCC 19089 / CIP 103742 / CB 15) (Caulobacter crescentus).